The primary structure comprises 357 residues: Arginine kinase (357 aa).

An N-acetylalanine modification is found at A2. Residues 9–91 (KLEEGFKKLE…FDPIIEDYHK (83 aa)) form the Phosphagen kinase N-terminal domain. An L-arginine-binding site is contributed by 64–68 (GVGVY). The Phosphagen kinase C-terminal domain occupies 119–356 (FVISTRVRCG…LELIKIEKEM (238 aa)). ATP contacts are provided by residues 122–126 (STRVR) and H185. An L-arginine-binding site is contributed by E225. Residue R229 coordinates ATP. L-arginine is bound at residue C271. ATP is bound by residues 280–284 (RASVH) and 309–314 (RGTRGE). E314 contacts L-arginine.

Belongs to the ATP:guanido phosphotransferase family.

The catalysed reaction is L-arginine + ATP = N(omega)-phospho-L-arginine + ADP + H(+). The polypeptide is Arginine kinase (Callinectes sapidus (Blue crab)).